The sequence spans 163 residues: Phosphopantetheine adenylyltransferase (163 aa).

Ser9 contacts substrate. ATP-binding positions include 9–10 and His17; that span reads SF. Residues Lys41, Thr73, and Arg87 each coordinate substrate. ATP is bound by residues 88 to 90, Glu98, and 123 to 129; these read GLR and YSYLSSS.

It belongs to the bacterial CoaD family. Homohexamer. Mg(2+) is required as a cofactor.

The protein localises to the cytoplasm. It carries out the reaction (R)-4'-phosphopantetheine + ATP + H(+) = 3'-dephospho-CoA + diphosphate. It participates in cofactor biosynthesis; coenzyme A biosynthesis; CoA from (R)-pantothenate: step 4/5. Functionally, reversibly transfers an adenylyl group from ATP to 4'-phosphopantetheine, yielding dephospho-CoA (dPCoA) and pyrophosphate. This is Phosphopantetheine adenylyltransferase from Lachnoclostridium phytofermentans (strain ATCC 700394 / DSM 18823 / ISDg) (Clostridium phytofermentans).